The sequence spans 282 residues: Bis(5'-nucleosyl)-tetraphosphatase, symmetrical (282 aa).

The protein belongs to the Ap4A hydrolase family.

The enzyme catalyses P(1),P(4)-bis(5'-adenosyl) tetraphosphate + H2O = 2 ADP + 2 H(+). Its function is as follows. Hydrolyzes diadenosine 5',5'''-P1,P4-tetraphosphate to yield ADP. This is Bis(5'-nucleosyl)-tetraphosphatase, symmetrical from Salmonella paratyphi A (strain ATCC 9150 / SARB42).